A 101-amino-acid chain; its full sequence is Large ribosomal subunit protein uL24 (101 aa).

Belongs to the universal ribosomal protein uL24 family. As to quaternary structure, part of the 50S ribosomal subunit.

One of two assembly initiator proteins, it binds directly to the 5'-end of the 23S rRNA, where it nucleates assembly of the 50S subunit. Its function is as follows. One of the proteins that surrounds the polypeptide exit tunnel on the outside of the subunit. This is Large ribosomal subunit protein uL24 from Streptococcus gordonii (strain Challis / ATCC 35105 / BCRC 15272 / CH1 / DL1 / V288).